The primary structure comprises 451 residues: uncharacterized protein (451 aa).

The next 11 membrane-spanning stretches (helical) occupy residues 13 to 33 (IGFVMAAAGSAIGLGAIWKFP), 41 to 61 (GGAFFLIFVLFTILLGYPLLV), 97 to 117 (ACFLVLSFYSVIGGWILLYIV), 142 to 162 (NPVQTLAAQLVFMALTVLVVA), 174 to 194 (AVMMPILFLLFILLVLRSLTL), 217 to 237 (ILFALGQAFFTLTLGVSVMVT), 255 to 275 (IVLMNIIVTLLAGLAIFPAVF), 299 to 319 (LPFGTLFFIGFLVAFLFAALT), 345 to 365 (WTSGLLIFLVGIPCCLSYGVL), 381 to 401 (FTVSNVLMPSGALLISLFIPL), and 429 to 449 (LLRFIVPLAIIIVFLNLIGIL).

Belongs to the sodium:neurotransmitter symporter (SNF) (TC 2.A.22) family.

The protein localises to the cell membrane. In terms of biological role, putative sodium-dependent transporter. This is an uncharacterized protein from Bacillus subtilis (strain 168).